The primary structure comprises 254 residues: Nickel import ATP-binding protein NikD (254 aa).

The region spanning 2–241 is the ABC transporter domain; sequence PQQIELRNIT…PKHTVTRSLV (240 aa). Residue 36–43 coordinates ATP; that stretch reads GGSGSGKS.

This sequence belongs to the ABC transporter superfamily. Nickel importer (TC 3.A.1.5.3) family. In terms of assembly, the complex is composed of two ATP-binding proteins (NikD and NikE), two transmembrane proteins (NikB and NikC) and a solute-binding protein (NikA).

It localises to the cell inner membrane. The catalysed reaction is Ni(2+)(out) + ATP + H2O = Ni(2+)(in) + ADP + phosphate + H(+). Functionally, part of the ABC transporter complex NikABCDE involved in nickel import. Responsible for energy coupling to the transport system. This chain is Nickel import ATP-binding protein NikD, found in Shigella flexneri.